We begin with the raw amino-acid sequence, 799 residues long: Elongation factor G, mitochondrial (799 aa).

The N-terminal 33 residues, 1 to 33 (MRSPSLARLQTRAVFGLTRSARFQPQTLLRQRC), are a transit peptide targeting the mitochondrion. The tr-type G domain occupies 97–384 (DKCRNIGIAA…GVIDYLPNPA (288 aa)). Residues 106 to 113 (AHIDSGKT), 182 to 186 (DTPGH), and 236 to 239 (NKMD) contribute to the GTP site.

It belongs to the TRAFAC class translation factor GTPase superfamily. Classic translation factor GTPase family. EF-G/EF-2 subfamily.

It is found in the mitochondrion. It participates in protein biosynthesis; polypeptide chain elongation. Its function is as follows. Mitochondrial GTPase that catalyzes the GTP-dependent ribosomal translocation step during translation elongation. During this step, the ribosome changes from the pre-translocational (PRE) to the post-translocational (POST) state as the newly formed A-site-bound peptidyl-tRNA and P-site-bound deacylated tRNA move to the P and E sites, respectively. Catalyzes the coordinated movement of the two tRNA molecules, the mRNA and conformational changes in the ribosome. The chain is Elongation factor G, mitochondrial (mef1) from Penicillium rubens (strain ATCC 28089 / DSM 1075 / NRRL 1951 / Wisconsin 54-1255) (Penicillium chrysogenum).